The primary structure comprises 50 residues: Small, acid-soluble spore protein P (50 aa).

The segment at 1-50 (MSKRKMGPKQQKNPELPKSPEQPYGEPLSGSKKEKKANHSGQKHNPHHGL) is disordered. Residues 33–50 (KEKKANHSGQKHNPHHGL) are compositionally biased toward basic residues.

Belongs to the SspP family.

The protein resides in the spore core. The polypeptide is Small, acid-soluble spore protein P (Oceanobacillus iheyensis (strain DSM 14371 / CIP 107618 / JCM 11309 / KCTC 3954 / HTE831)).